Reading from the N-terminus, the 412-residue chain is Short-chain specific acyl-CoA dehydrogenase, mitochondrial (412 aa).

The N-terminal 24 residues, 1–24 (MAAALLARASGPARRALCPRAWRQ), are a transit peptide targeting the mitochondrion. The residue at position 27 (threonine 27) is a Phosphothreonine. Lysine 51 is subject to N6-acetyllysine; alternate. An N6-succinyllysine; alternate modification is found at lysine 51. Position 72 is an N6-acetyllysine (lysine 72). Residue lysine 129 is modified to N6-acetyllysine; alternate. Residue lysine 129 is modified to N6-succinyllysine; alternate. FAD contacts are provided by residues 152 to 161 (FALSEPGNGS) and 185 to 187 (WIT). Serine 161 is a binding site for substrate. Residue lysine 208 is modified to N6-acetyllysine. Position 262 is an N6-acetyllysine; alternate (lysine 262). Lysine 262 carries the post-translational modification N6-succinyllysine; alternate. 269-272 (DMGR) lines the substrate pocket. Arginine 297 serves as a coordination point for FAD. Lysine 306 carries the N6-acetyllysine; alternate modification. N6-succinyllysine; alternate is present on lysine 306. Residues glutamine 308 and 365–369 (QILGG) contribute to the FAD site. The active-site Proton acceptor is glutamate 392. Glycine 393 is a binding site for substrate. 394–396 (TSE) serves as a coordination point for FAD.

It belongs to the acyl-CoA dehydrogenase family. Homotetramer. The cofactor is FAD.

The protein localises to the mitochondrion matrix. It catalyses the reaction a short-chain 2,3-saturated fatty acyl-CoA + oxidized [electron-transfer flavoprotein] + H(+) = a short-chain (2E)-enoyl-CoA + reduced [electron-transfer flavoprotein]. The enzyme catalyses butanoyl-CoA + oxidized [electron-transfer flavoprotein] + H(+) = (2E)-butenoyl-CoA + reduced [electron-transfer flavoprotein]. The catalysed reaction is pentanoyl-CoA + oxidized [electron-transfer flavoprotein] + H(+) = (2E)-pentenoyl-CoA + reduced [electron-transfer flavoprotein]. It carries out the reaction hexanoyl-CoA + oxidized [electron-transfer flavoprotein] + H(+) = (2E)-hexenoyl-CoA + reduced [electron-transfer flavoprotein]. The protein operates within lipid metabolism; mitochondrial fatty acid beta-oxidation. Functionally, short-chain specific acyl-CoA dehydrogenase is one of the acyl-CoA dehydrogenases that catalyze the first step of mitochondrial fatty acid beta-oxidation, an aerobic process breaking down fatty acids into acetyl-CoA and allowing the production of energy from fats. The first step of fatty acid beta-oxidation consists in the removal of one hydrogen from C-2 and C-3 of the straight-chain fatty acyl-CoA thioester, resulting in the formation of trans-2-enoyl-CoA. Among the different mitochondrial acyl-CoA dehydrogenases, short-chain specific acyl-CoA dehydrogenase acts specifically on acyl-CoAs with saturated 4 to 6 carbons long primary chains. The protein is Short-chain specific acyl-CoA dehydrogenase, mitochondrial (ACADS) of Homo sapiens (Human).